A 131-amino-acid chain; its full sequence is Beta/delta-urticatoxin-Dm2a (131 aa).

The signal sequence occupies residues 1–24 (MKSSATVVLLVAAVTAAMVMSSSA). Residues 25–69 (SGDAVMIDEHNNIMTSVEGKRGIGSSVVANGGNRKMANVLLSGWE) constitute a propeptide that is removed on maturation. Cystine bridges form between cysteine 72/cysteine 88, cysteine 79/cysteine 93, cysteine 87/cysteine 101, cysteine 103/cysteine 117, cysteine 110/cysteine 122, and cysteine 116/cysteine 130.

Belongs to the urticatoxin-2 family. As to expression, expressed in trichomes, that are stiff epidermal hairs located on the surface of petioles and leaves.

It is found in the secreted. Functionally, plant defense neurotoxin that causes pain and systemic symptoms in mammals via modulation of voltage-gated sodium channels (Nav). Potent modulator of human Nav1.5/SCN5A (EC(50)=55 nM), Nav1.6/SCN8A (EC(50)=0.86 nM), and Nav1.7/SCN9A (EC(50)=208 nM), where it shifts the activation threshold to more negative potentials and delays fast inactivation. Also shifts the voltage-dependence of steady-state fast inactivation of Nav1.6/SCN8A, but not that of Nav1.5/SCN5A or Nav1.7/SCN9A. On Nav1.7/SCN9A, principally acts by binding to extracellular loops of domain IV (Nav site 3). In vivo, intraplantar injection into mice causes numerous dose-dependent, immediate, and long-lasting spontaneous pain behaviors, while no swelling is observed in the injected paw. At the highest doses tested, systemic symptoms including hypokinesia and hypersalivation are observed. This is Beta/delta-urticatoxin-Dm2a from Dendrocnide moroides (Gympie stinging tree).